A 313-amino-acid chain; its full sequence is uncharacterized protein (313 aa).

29–61 (ALVTGGGTGLGKAIATTFAHLGASVAIAARRLD) serves as a coordination point for NADP(+).

Belongs to the short-chain dehydrogenases/reductases (SDR) family. 2,4-dienoyl-CoA reductase subfamily.

This is an uncharacterized protein from Caenorhabditis elegans.